Consider the following 238-residue polypeptide: Purine nucleoside phosphorylase DeoD-type 1 (238 aa).

His-5 lines the a purine D-ribonucleoside pocket. Phosphate-binding positions include Gly-21, Arg-25, Arg-44, and 88–91; that span reads RVGS. A purine D-ribonucleoside contacts are provided by residues 180–182 and 204–205; these read EME and SD. Asp-205 (proton donor) is an active-site residue.

Belongs to the PNP/UDP phosphorylase family. As to quaternary structure, homohexamer; trimer of homodimers.

It carries out the reaction a purine D-ribonucleoside + phosphate = a purine nucleobase + alpha-D-ribose 1-phosphate. It catalyses the reaction a purine 2'-deoxy-D-ribonucleoside + phosphate = a purine nucleobase + 2-deoxy-alpha-D-ribose 1-phosphate. Its function is as follows. Catalyzes the reversible phosphorolytic breakdown of the N-glycosidic bond in the beta-(deoxy)ribonucleoside molecules, with the formation of the corresponding free purine bases and pentose-1-phosphate. In Aliivibrio fischeri (strain ATCC 700601 / ES114) (Vibrio fischeri), this protein is Purine nucleoside phosphorylase DeoD-type 1.